Reading from the N-terminus, the 353-residue chain is Photosystem II protein D1 (353 aa).

T2 is subject to N-acetylthreonine. At T2 the chain carries Phosphothreonine. The next 3 membrane-spanning stretches (helical) occupy residues 29 to 46, 118 to 133, and 142 to 156; these read YIGWFGVLMIPTLLTATS, HFLLGVACYMGREWEL, and WIAVAYSAPVAAAAA. Chlorophyll a is bound at residue H118. Y126 is a pheophytin a binding site. Positions 170 and 189 each coordinate [CaMn4O5] cluster. Residues 197 to 218 traverse the membrane as a helical segment; the sequence is FHMLGVAGVFGGSLFSAMHGSL. Position 198 (H198) interacts with chlorophyll a. A quinone contacts are provided by residues H215 and 264–265; that span reads SF. H215 serves as a coordination point for Fe cation. A Fe cation-binding site is contributed by H272. Residues 274 to 288 traverse the membrane as a helical segment; the sequence is FLAAWPVVGIWFTAL. [CaMn4O5] cluster is bound by residues H332, E333, D342, and A344. Positions 345 to 353 are excised as a propeptide; it reads AVEAPSTNG.

This sequence belongs to the reaction center PufL/M/PsbA/D family. As to quaternary structure, PSII is composed of 1 copy each of membrane proteins PsbA, PsbB, PsbC, PsbD, PsbE, PsbF, PsbH, PsbI, PsbJ, PsbK, PsbL, PsbM, PsbT, PsbX, PsbY, PsbZ, Psb30/Ycf12, at least 3 peripheral proteins of the oxygen-evolving complex and a large number of cofactors. It forms dimeric complexes. The D1/D2 heterodimer binds P680, chlorophylls that are the primary electron donor of PSII, and subsequent electron acceptors. It shares a non-heme iron and each subunit binds pheophytin, quinone, additional chlorophylls, carotenoids and lipids. D1 provides most of the ligands for the Mn4-Ca-O5 cluster of the oxygen-evolving complex (OEC). There is also a Cl(-1) ion associated with D1 and D2, which is required for oxygen evolution. The PSII complex binds additional chlorophylls, carotenoids and specific lipids. serves as cofactor. Post-translationally, tyr-161 forms a radical intermediate that is referred to as redox-active TyrZ, YZ or Y-Z. C-terminally processed by CTPA; processing is essential to allow assembly of the oxygen-evolving complex and thus photosynthetic growth.

The protein resides in the plastid. The protein localises to the chloroplast thylakoid membrane. It carries out the reaction 2 a plastoquinone + 4 hnu + 2 H2O = 2 a plastoquinol + O2. In terms of biological role, photosystem II (PSII) is a light-driven water:plastoquinone oxidoreductase that uses light energy to abstract electrons from H(2)O, generating O(2) and a proton gradient subsequently used for ATP formation. It consists of a core antenna complex that captures photons, and an electron transfer chain that converts photonic excitation into a charge separation. The D1/D2 (PsbA/PsbD) reaction center heterodimer binds P680, the primary electron donor of PSII as well as several subsequent electron acceptors. This Nandina domestica (Heavenly bamboo) protein is Photosystem II protein D1.